A 361-amino-acid chain; its full sequence is Mitogen-activated protein kinase 1 (361 aa).

The Protein kinase domain maps to 28-316; the sequence is YINLAYIGEG…VEAALAHPYL (289 aa). ATP is bound by residues 34-42 and Lys57; that span reads IGEGAYGMV. The Proton acceptor role is filled by Asp152. A Phosphothreonine modification is found at Thr188. The short motif at 188–190 is the TXY element; it reads TEY. Tyr190 is modified (phosphotyrosine).

The protein belongs to the protein kinase superfamily. CMGC Ser/Thr protein kinase family. MAP kinase subfamily. In terms of assembly, interacts with CDK2AP2. Mg(2+) is required as a cofactor. Dually phosphorylated on Thr-188 and Tyr-190, which activates the enzyme. As to expression, expressed in the central nervous system, kidney, liver, intestine and the hematopoietic system. Also found in heart, muscle, pancreas and lung.

It localises to the cytoplasm. The protein resides in the cytoskeleton. It is found in the microtubule organizing center. The protein localises to the centrosome. Its subcellular location is the spindle. It catalyses the reaction L-seryl-[protein] + ATP = O-phospho-L-seryl-[protein] + ADP + H(+). The enzyme catalyses L-threonyl-[protein] + ATP = O-phospho-L-threonyl-[protein] + ADP + H(+). Activated by tyrosine phosphorylation during the M phase of the meiotic cell cycle. Dephosphorylated and inactivated by DUSP1. Serine/threonine kinase which acts as an essential component of the MAP kinase signal transduction pathway. Plays an important role in the MAPK/ERK cascade. Depending on the cellular context, this cascade mediates diverse biological functions such as cell growth, adhesion, survival and differentiation through the regulation of transcription, translation, cytoskeletal rearrangements. The MAPK/ERK cascade also plays a role in initiation and regulation of meiosis, mitosis, and postmitotic functions in differentiated cells by phosphorylating a number of transcription factors. Many of the substrates are localized in the nucleus, and seem to participate in the regulation of transcription upon stimulation. However, other substrates are found in the cytosol as well as in other cellular organelles, and those are responsible for processes such as translation, mitosis and apoptosis. Moreover, the MAPK/ERK cascade is also involved in the regulation of the endosomal dynamics, including lysosome processing and endosome cycling through the perinuclear recycling compartment (PNRC); as well as in the fragmentation of the Golgi apparatus during mitosis. Phosphorylates microtubule-associated protein 2 (MAP2), myelin basic protein (MBP) and Elk-1. Phosphorylates dual specificity protein phosphatase 1 (DUSP1) during meiosis, increasing its stability. Activated by M phase promoting factor (MPF). Plays a role in the spindle assembly checkpoint. This Xenopus laevis (African clawed frog) protein is Mitogen-activated protein kinase 1 (mapk1).